The primary structure comprises 67 residues: uncharacterized protein (67 aa).

This is an uncharacterized protein from Archaeoglobus fulgidus (strain ATCC 49558 / DSM 4304 / JCM 9628 / NBRC 100126 / VC-16).